The sequence spans 76 residues: Vasotab-TY2 (76 aa).

Residues 1–21 (MKFALFSVLVLMLIATFVAAD) form the signal peptide. One can recognise a Kazal-like domain in the interval 22–76 (DCPRICTADYTPVCGTPSGGRRSANRTFANQCGLDSHNCLNKGATYDKLHDGECK). 3 disulfides stabilise this stretch: Cys-23-Cys-60, Cys-27-Cys-53, and Cys-35-Cys-75.

Expressed by the salivary gland.

Its subcellular location is the secreted. Functionally, vasodilator protein that inhibits vasoconstriction of isolated rat femoral artery induced by phenylephrine. Since platelet aggregation and vasoconstriction are key hemostatic responses, particularly in small wounds, this protein likely participates in the antihemostatic responses during blood feeding. Blocks L-type calcium channels (Cav1/CACNA1) in left ventricular myocytes isolated from rat hearts. This Tabanus yao (Horsefly) protein is Vasotab-TY2.